Here is a 286-residue protein sequence, read N- to C-terminus: 2,3,4,5-tetrahydropyridine-2,6-dicarboxylate N-succinyltransferase (286 aa).

2 residues coordinate substrate: R111 and D148.

It belongs to the transferase hexapeptide repeat family. In terms of assembly, homotrimer.

It is found in the cytoplasm. The catalysed reaction is (S)-2,3,4,5-tetrahydrodipicolinate + succinyl-CoA + H2O = (S)-2-succinylamino-6-oxoheptanedioate + CoA. It participates in amino-acid biosynthesis; L-lysine biosynthesis via DAP pathway; LL-2,6-diaminopimelate from (S)-tetrahydrodipicolinate (succinylase route): step 1/3. In Rhizobium etli (strain ATCC 51251 / DSM 11541 / JCM 21823 / NBRC 15573 / CFN 42), this protein is 2,3,4,5-tetrahydropyridine-2,6-dicarboxylate N-succinyltransferase.